We begin with the raw amino-acid sequence, 113 residues long: MDALHGICVNINKFYKCRRIVIEYDNCSASFTFNCVHDNRKVNCLEIVGLRRNEYVCLGKIINGDKIISVHENSVNGKIIVPVEDTFDFGLFTLKNKITDAVIKLNVYINETS.

This is ECORI-T site protein ETM (ETM) from Autographa californica nuclear polyhedrosis virus (AcMNPV).